Reading from the N-terminus, the 189-residue chain is Flavin prenyltransferase UbiX (189 aa).

FMN is bound by residues 10-12, serine 37, 88-91, and arginine 123; these read GAS and SIKT. Positions 153 and 169 each coordinate dimethylallyl phosphate.

It belongs to the UbiX/PAD1 family.

It carries out the reaction dimethylallyl phosphate + FMNH2 = prenylated FMNH2 + phosphate. Its pathway is cofactor biosynthesis; ubiquinone biosynthesis. Functionally, flavin prenyltransferase that catalyzes the synthesis of the prenylated FMN cofactor (prenyl-FMN) for 4-hydroxy-3-polyprenylbenzoic acid decarboxylase UbiD. The prenyltransferase is metal-independent and links a dimethylallyl moiety from dimethylallyl monophosphate (DMAP) to the flavin N5 and C6 atoms of FMN. In Escherichia coli O157:H7, this protein is Flavin prenyltransferase UbiX.